Consider the following 1077-residue polypeptide: Adenylate cyclase type 4 (1077 aa).

Residues 1–28 (MARLFSPRPPPSEDLFYETYYSLSQQYP) are Cytoplasmic-facing. The next 6 membrane-spanning stretches (helical) occupy residues 29-50 (LLLLLLGIVLCALAALLAVAWA), 61-80 (FLTTVLCALGGFSLLLGLAS), 94-117 (GLVWVALLALGHAFLFTGGVVSAW), 120-138 (VSYFLFVIFTAYAMLPLGM), 141-162 (AAVAGLASSLSHLLVLGLYLGP), and 170-190 (LLPQLAANAVLFLCGNVAGVY). Topologically, residues 191–585 (HKALMERALR…YRLSAIPAFK (395 aa)) are cytoplasmic. Residues aspartate 278, isoleucine 279, and aspartate 322 each coordinate Mg(2+). Residues 278-283 (DIVGFT), 320-322 (LGD), and arginine 366 contribute to the ATP site. Phosphoserine is present on serine 520. Threonine 536 bears the Phosphothreonine mark. Transmembrane regions (helical) follow at residues 586-607 (YYEACTFLVFLSNFIIQMLVTN), 611-633 (ALAITYSITFLLFLLILFVCFSE), and 664-687 (IALGTATILLVFAMAITSLFFFPT). The Extracellular segment spans residues 688 to 714 (SSDCPFQAPNVSSMISNLSWELPGSLP). Asparagine 697 and asparagine 704 each carry an N-linked (GlcNAc...) asparagine glycan. The next 3 membrane-spanning stretches (helical) occupy residues 715–736 (LISVPYSMHCCTLGFLSCSLFL), 744–764 (LLLLLLWLAASCSLFLHSHAW), and 791–807 (MGAISFFIFFFTLLVLA). The Cytoplasmic portion of the chain corresponds to 808–1077 (RQNEYYCRLD…RTGPPSATLG (270 aa)). Residues lysine 925, 1005 to 1007 (DIW), 1012 to 1016 (NVASR), and lysine 1052 each bind ATP.

Belongs to the adenylyl cyclase class-4/guanylyl cyclase family. It depends on Mg(2+) as a cofactor. Mn(2+) is required as a cofactor. In terms of tissue distribution, detected in the zona glomerulosa and the zona fasciculata in the adrenal gland (at protein level).

It is found in the cell membrane. It localises to the cytoplasm. The enzyme catalyses ATP = 3',5'-cyclic AMP + diphosphate. Activated by forskolin. Insensitive to calcium/calmodulin. Stimulated by GNAS and by the G-protein beta and gamma subunit complex. Its function is as follows. Catalyzes the formation of the signaling molecule cAMP in response to G-protein signaling. The polypeptide is Adenylate cyclase type 4 (ADCY4) (Homo sapiens (Human)).